Reading from the N-terminus, the 709-residue chain is MKKNKGLNEATTSEKPQFPKRTAWKIFWWVVILAIIIGILVYILMPRATTAVIEKWELSGTTLSAQIKGLSGKHTFQRINNSTYVTDDILQVSISFQGINPIVVTAHKATNGSGETIFNIANLSINQSTGKAIVNGMMTQDQKSNNGTELASIKGLHDIGTFVAPDTRARDVLNIFFGLLPIIIFVIFFLLFWRSARGISGGGRSEEDNIFSIGKTQAKLAKSSVRFDNIAGLQEEKHELLEIVDYLKNPLKYAQMGARSPRGVILYGPPGTGKTLLAKAVAGEAGVPFFQSTGSGFEDMLVGVGAKRVRDLFNKAKKAAPCIIFIDEIDSVGSKRGRVELSSYSVVEQTLNQLLAEMDGFTSRTGVVVMAATNRLDVLDDALLRPGRFDRHIQINLPDIKEREGILQVHAKNKNLSSKISLLDVAKRTPGFSGAQLENVINEATLLAVRDNRTTINMNDIDEAIDRVIAGPAKKSRVVSDADRKLVAYHEAGHALVGLHVHSNDEVQKITIIPRGQAGGYTLSTPKSGDLNLKRKSDLLAMIATAMGGRAAEEEIYGPLEITTGASSDFYKATNIARAMVTQLGMSKLGQVQYVPSQGTVPPGTKLFSEQTAKDIDFEINAIIEEQYKKARTIIKTNRKELELLVEALLIAETILKSDIDYIHEHTKLPPEILAQKQEQQAKQKAEAKEAKLNKKTEKDTEKDSETNS.

Over M1–K25 the chain is Cytoplasmic. The helical transmembrane segment at I26–P46 threads the bilayer. Over R47–D171 the chain is Extracellular. The helical transmembrane segment at V172 to F192 threads the bilayer. Over W193–S709 the chain is Cytoplasmic. Residue G268–T275 participates in ATP binding. H490 is a Zn(2+) binding site. E491 is a catalytic residue. Zn(2+)-binding residues include H494 and D569. A disordered region spans residues I673 to S709. Residues Q680 to S709 are compositionally biased toward basic and acidic residues.

It in the central section; belongs to the AAA ATPase family. In the C-terminal section; belongs to the peptidase M41 family. Homohexamer. The cofactor is Zn(2+).

Its subcellular location is the cell membrane. Its function is as follows. Acts as a processive, ATP-dependent zinc metallopeptidase for both cytoplasmic and membrane proteins. Plays a role in the quality control of integral membrane proteins. The polypeptide is ATP-dependent zinc metalloprotease FtsH (Mycoplasma pneumoniae (strain ATCC 29342 / M129 / Subtype 1) (Mycoplasmoides pneumoniae)).